The chain runs to 473 residues: Mannose-1-phosphate guanylyltransferase (473 aa).

Belongs to the mannose-6-phosphate isomerase type 2 family. In terms of assembly, homodimer.

The enzyme catalyses alpha-D-mannose 1-phosphate + GTP + H(+) = GDP-alpha-D-mannose + diphosphate. It functions in the pathway nucleotide-sugar biosynthesis; GDP-alpha-D-mannose biosynthesis; GDP-alpha-D-mannose from alpha-D-mannose 1-phosphate (GTP route): step 1/1. It participates in bacterial outer membrane biogenesis; LPS O-antigen biosynthesis. In terms of biological role, involved in GDP-mannose biosynthesis which serves as the activated sugar nucleotide precursor for mannose residues in cell surface polysaccharides. This enzyme participates in synthesis of the LPS group C2 O antigen. The sequence is that of Mannose-1-phosphate guanylyltransferase (rfbM) from Salmonella muenchen.